The following is a 246-amino-acid chain: Uridylate kinase (246 aa).

16–19 lines the ATP pocket; it reads KFSG. Gly58 is a binding site for UMP. ATP-binding residues include Gly59 and Arg63. Residues Asp78 and 139–146 contribute to the UMP site; that span reads TGNPFFTT. Thr166, Tyr172, and Asp175 together coordinate ATP.

This sequence belongs to the UMP kinase family. As to quaternary structure, homohexamer.

The protein localises to the cytoplasm. The catalysed reaction is UMP + ATP = UDP + ADP. The protein operates within pyrimidine metabolism; CTP biosynthesis via de novo pathway; UDP from UMP (UMPK route): step 1/1. Inhibited by UTP. Functionally, catalyzes the reversible phosphorylation of UMP to UDP. This chain is Uridylate kinase, found in Legionella pneumophila (strain Corby).